Reading from the N-terminus, the 199-residue chain is Protein MM_0484 (199 aa).

In terms of domain architecture, AMMECR1 spans 5 to 196 (TEGRAAVKLA…EKEPDGEVIE (192 aa)).

In Methanosarcina mazei (strain ATCC BAA-159 / DSM 3647 / Goe1 / Go1 / JCM 11833 / OCM 88) (Methanosarcina frisia), this protein is Protein MM_0484.